The chain runs to 350 residues: ATPase GET3 (350 aa).

Residue 26–33 (KGGVGKTT) coordinates ATP. D57 is a catalytic residue. ATP is bound by residues E243 and N270. C282 and C285 together coordinate Zn(2+).

This sequence belongs to the arsA ATPase family. Homodimer. Component of the Golgi to ER traffic (GET) complex, which is composed of GET1, GET2 and GET3. Within the complex, GET1 and GET2 form a heterotetramer which is stabilized by phosphatidylinositol binding and which binds to the GET3 homodimer. Interacts with the chloride channel protein GEF1.

The protein localises to the cytoplasm. The protein resides in the endoplasmic reticulum. It localises to the golgi apparatus. In terms of biological role, ATPase required for the post-translational delivery of tail-anchored (TA) proteins to the endoplasmic reticulum. Recognizes and selectively binds the transmembrane domain of TA proteins in the cytosol. This complex then targets to the endoplasmic reticulum by membrane-bound receptors GET1 and GET2, where the tail-anchored protein is released for insertion. This process is regulated by ATP binding and hydrolysis. ATP binding drives the homodimer towards the closed dimer state, facilitating recognition of newly synthesized TA membrane proteins. ATP hydrolysis is required for insertion. Subsequently, the homodimer reverts towards the open dimer state, lowering its affinity for the GET1-GET2 receptor, and returning it to the cytosol to initiate a new round of targeting. Cooperates with the HDEL receptor ERD2 to mediate the ATP-dependent retrieval of resident ER proteins that contain a C-terminal H-D-E-L retention signal from the Golgi to the ER. Involved in low-level resistance to the oxyanions arsenite and arsenate, and in heat tolerance. The polypeptide is ATPase GET3 (Candida dubliniensis (strain CD36 / ATCC MYA-646 / CBS 7987 / NCPF 3949 / NRRL Y-17841) (Yeast)).